Consider the following 108-residue polypeptide: Translation initiation factor 1A (108 aa).

In terms of domain architecture, S1-like spans 10 to 84 (IRVITPNKKS…EKGDIIYRYT (75 aa)).

The protein belongs to the eIF-1A family.

In terms of biological role, seems to be required for maximal rate of protein biosynthesis. Enhances ribosome dissociation into subunits and stabilizes the binding of the initiator Met-tRNA(I) to 40 S ribosomal subunits. This is Translation initiation factor 1A from Picrophilus torridus (strain ATCC 700027 / DSM 9790 / JCM 10055 / NBRC 100828 / KAW 2/3).